Consider the following 206-residue polypeptide: Ribosomal RNA large subunit methyltransferase E (206 aa).

S-adenosyl-L-methionine-binding residues include Gly60, Trp62, Asp80, Asn96, and Asp121. Lys161 acts as the Proton acceptor in catalysis.

It belongs to the class I-like SAM-binding methyltransferase superfamily. RNA methyltransferase RlmE family.

It is found in the cytoplasm. It catalyses the reaction uridine(2552) in 23S rRNA + S-adenosyl-L-methionine = 2'-O-methyluridine(2552) in 23S rRNA + S-adenosyl-L-homocysteine + H(+). Functionally, specifically methylates the uridine in position 2552 of 23S rRNA at the 2'-O position of the ribose in the fully assembled 50S ribosomal subunit. In Francisella philomiragia subsp. philomiragia (strain ATCC 25017 / CCUG 19701 / FSC 153 / O#319-036), this protein is Ribosomal RNA large subunit methyltransferase E.